We begin with the raw amino-acid sequence, 457 residues long: tRNA-2-methylthio-N(6)-dimethylallyladenosine synthase (457 aa).

An MTTase N-terminal domain is found at 3-120; sequence KKVYVKTFGC…LPQMIDARRE (118 aa). Cys12, Cys49, Cys83, Cys157, Cys161, and Cys164 together coordinate [4Fe-4S] cluster. The 235-residue stretch at 143 to 377 folds into the Radical SAM core domain; it reads RVEGPSAFVS…QATIEENVAR (235 aa). Residues 380 to 447 form the TRAM domain; sequence QSMLGKVERI…PHSLRGELVL (68 aa).

The protein belongs to the methylthiotransferase family. MiaB subfamily. Monomer. Requires [4Fe-4S] cluster as cofactor.

Its subcellular location is the cytoplasm. It catalyses the reaction N(6)-dimethylallyladenosine(37) in tRNA + (sulfur carrier)-SH + AH2 + 2 S-adenosyl-L-methionine = 2-methylsulfanyl-N(6)-dimethylallyladenosine(37) in tRNA + (sulfur carrier)-H + 5'-deoxyadenosine + L-methionine + A + S-adenosyl-L-homocysteine + 2 H(+). In terms of biological role, catalyzes the methylthiolation of N6-(dimethylallyl)adenosine (i(6)A), leading to the formation of 2-methylthio-N6-(dimethylallyl)adenosine (ms(2)i(6)A) at position 37 in tRNAs that read codons beginning with uridine. This Burkholderia pseudomallei (strain 1710b) protein is tRNA-2-methylthio-N(6)-dimethylallyladenosine synthase.